A 73-amino-acid polypeptide reads, in one-letter code: UPF0154 protein MG335.1 homolog (73 aa).

A helical membrane pass occupies residues 6 to 26 (LALGLGIPLSLLVGVIIGYFI).

It belongs to the UPF0154 family.

It localises to the membrane. In Mycoplasma pneumoniae (strain ATCC 29342 / M129 / Subtype 1) (Mycoplasmoides pneumoniae), this protein is UPF0154 protein MG335.1 homolog.